The chain runs to 273 residues: SAGA-associated factor 29 homolog B (273 aa).

One can recognise an SGF29 C-terminal domain in the interval 128–273; sequence EAYASLKGEQ…VVALPEGHRQ (146 aa). Histone H3K4me3 N-terminus binding regions lie at residues 171–173 and 220–223; these read DEE and GTTA. The histone H3K4me3 binding stretch occupies residues 245 to 248; that stretch reads FDDD.

It belongs to the SGF29 family. In terms of tissue distribution, expressed in roots, rosette leaves, cauline leaves, stems and flowers.

The protein localises to the nucleus. Chromatin reader component of the transcription regulatory histone acetylation (HAT) complex SAGA. This Arabidopsis thaliana (Mouse-ear cress) protein is SAGA-associated factor 29 homolog B.